The primary structure comprises 158 residues: Low molecular weight phosphotyrosine protein phosphatase (158 aa).

Ala2 is subject to N-acetylalanine. Catalysis depends on Cys13, which acts as the Nucleophile. Arg19 is a catalytic residue. The active-site Proton donor is the Asp130. Residues Tyr132 and Tyr133 each carry the phosphotyrosine modification.

This sequence belongs to the low molecular weight phosphotyrosine protein phosphatase family. Interacts with EPHA2; dephosphorylates EPHA2. Interacts with EPHB1. Interacts with the SH3 domain of SPTAN1. In terms of processing, phosphorylated by LCK. Phosphorylation at Tyr-132 increases its phosphatase activity.

It is found in the cytoplasm. The catalysed reaction is O-phospho-L-tyrosyl-[protein] + H2O = L-tyrosyl-[protein] + phosphate. It catalyses the reaction a phosphate monoester + H2O = an alcohol + phosphate. Its activity is regulated as follows. Inhibited by sulfhydryl reagents. Acts on tyrosine phosphorylated proteins, low-MW aryl phosphates and natural and synthetic acyl phosphates with differences in substrate specificity between isoform 1 and isoform 2. The chain is Low molecular weight phosphotyrosine protein phosphatase (ACP1) from Pongo abelii (Sumatran orangutan).